The chain runs to 270 residues: Cyclohexanol dehydrogenase (270 aa).

NAD(+) is bound by residues Arg19, Asp40, Asp78, Val79, Asn105, Tyr176, Lys180, Ile209, and Thr211. Tyr176 acts as the Proton acceptor in catalysis.

The protein belongs to the short-chain dehydrogenases/reductases (SDR) family. Homodimer.

Its subcellular location is the cytoplasm. It catalyses the reaction cyclohexanol + NAD(+) = cyclohexanone + NADH + H(+). Activity is enhanced by the addition of Ba(2+) and Mg(2+), but inhibited by the addition of Al(3+), Ca(2+), Co(2+), Cu(2+), Mn(2+) and Zn(2+). Catalyzes the oxidation of cyclohexanol to cyclohexanone. Can also use a broad range of other alcohols, including trans-cyclohexane-1,2-diol, trans-cyclopentane-1,2-diol, cyclopentanol, hexane-1,2-diol, ethanol, 1-propanol, 1-butanol, 1-pentanol and 1-hexanol. In Rhodococcus sp. (strain TK6), this protein is Cyclohexanol dehydrogenase.